We begin with the raw amino-acid sequence, 703 residues long: MTPITKSFQYGQHTVTLETGVIARQATAAVMASMDDTSVLVSVVGKKDTKPGQDFFPLTVNYQERTYAAGKIPGGFFKREGRPSEYETLTSRLIDRPIRPLFPDGFMNEVQIIVTVVSANPEIPTDIISLIGTSAALAISGMPFNGPVGAARVGYTDGQYVLNTRTSELEISQLDLVVAGTKGAVLMVESEAEVLSEDVMLGAVMFGHEQMQTVVNAVTEFAAEVNTPKWDWVAEPANVTLKDKIKALAEAEMTEAYQISDKMARKDAIVALTDKTVAAIVEADAEQDAKEVSELLHELESDVVRSRILAGQPRIDGRDPAMIRALDVATGILPRTHGSALFTRGETQAIVAATLGTERDAQMIDGLNGKVDSRFMLHYNFPPYCVGETGFVGSPKRREIGHGRLAKRGIQAVMPSEKEFPYVVRVVSEITESNGSSSMASVCGTSLALMDAGVPIKASVAGIAMGLVKNDENFVVLSDILGDEDHLGDMDFKVAGTTEGITALQMDIKIEGITQEIMQVALKQAKEARLHILGVMDQAISGHRDEMSEFAPRIYTLKIDQDKIRDVIGKGGAMIRSITEASDTNIEIEDDGTIKIFATERAKADIAISKIEQVTADVEAGKTYEGKVTRIVDFGAFVEILPGKEGLVHISQIAHERVNKVADHLSEGQIINVKVMEIDRQNRVRLSIKELLEKPAAPAEGNE.

Mg(2+)-binding residues include Asp485 and Asp491. Positions 552–611 (PRIYTLKIDQDKIRDVIGKGGAMIRSITEASDTNIEIEDDGTIKIFATERAKADIAISKI) constitute a KH domain. An S1 motif domain is found at 621-689 (GKTYEGKVTR…RQNRVRLSIK (69 aa)).

It belongs to the polyribonucleotide nucleotidyltransferase family. In terms of assembly, component of the RNA degradosome, which is a multiprotein complex involved in RNA processing and mRNA degradation. It depends on Mg(2+) as a cofactor.

It is found in the cytoplasm. It catalyses the reaction RNA(n+1) + phosphate = RNA(n) + a ribonucleoside 5'-diphosphate. Its function is as follows. Involved in mRNA degradation. Catalyzes the phosphorolysis of single-stranded polyribonucleotides processively in the 3'- to 5'-direction. The chain is Polyribonucleotide nucleotidyltransferase from Pseudoalteromonas atlantica (strain T6c / ATCC BAA-1087).